We begin with the raw amino-acid sequence, 64 residues long: LTCKTCPFTTCPNSESCPGGQSICYQRKWEEHRGERIERRCVANCPAFGSHDTSLLCCTRDNCN.

Cystine bridges form between Cys-3–Cys-24, Cys-6–Cys-11, Cys-17–Cys-41, Cys-45–Cys-57, and Cys-58–Cys-63.

The protein belongs to the three-finger toxin family. Ancestral subfamily. Expressed by the venom gland.

It localises to the secreted. Its function is as follows. Allosteric modulator of the GABA(A) receptor (GABR), possibly increasing receptor affinity for the agonist, thus enhancing receptor opening and macroscopic desensitization. In vivo, intracerebroventricular injection into mice results in periods of reduced basal activity, followed by bursts of intense seizures and death. The polypeptide is Micrurotoxin 1 (Micrurus mipartitus (Red-tailed coral snake)).